We begin with the raw amino-acid sequence, 235 residues long: Uridylate kinase (235 aa).

12-15 (KISG) lines the ATP pocket. Position 54 (Gly54) interacts with UMP. ATP is bound by residues Gly55 and Arg59. UMP contacts are provided by residues Asp72 and 133-140 (TGNPFFST). Positions 166 and 169 each coordinate ATP.

Belongs to the UMP kinase family. In terms of assembly, homohexamer.

It localises to the cytoplasm. The catalysed reaction is UMP + ATP = UDP + ADP. Its pathway is pyrimidine metabolism; CTP biosynthesis via de novo pathway; UDP from UMP (UMPK route): step 1/1. Inhibited by UTP. Functionally, catalyzes the reversible phosphorylation of UMP to UDP. The chain is Uridylate kinase from Acetivibrio thermocellus (strain ATCC 27405 / DSM 1237 / JCM 9322 / NBRC 103400 / NCIMB 10682 / NRRL B-4536 / VPI 7372) (Clostridium thermocellum).